Reading from the N-terminus, the 234-residue chain is Carboxy-S-adenosyl-L-methionine synthase (234 aa).

Residues Tyr35, Gly60–Ser62, Asp83–Asn84, Asp109–Ile110, Asn124, and Arg191 each bind S-adenosyl-L-methionine.

The protein belongs to the class I-like SAM-binding methyltransferase superfamily. Cx-SAM synthase family. As to quaternary structure, homodimer.

The catalysed reaction is prephenate + S-adenosyl-L-methionine = carboxy-S-adenosyl-L-methionine + 3-phenylpyruvate + H2O. Functionally, catalyzes the conversion of S-adenosyl-L-methionine (SAM) to carboxy-S-adenosyl-L-methionine (Cx-SAM). In Campylobacter concisus (strain 13826), this protein is Carboxy-S-adenosyl-L-methionine synthase.